A 155-amino-acid polypeptide reads, in one-letter code: Small ribosomal subunit protein uS7c (155 aa).

This sequence belongs to the universal ribosomal protein uS7 family. Part of the 30S ribosomal subunit.

The protein resides in the plastid. Its function is as follows. One of the primary rRNA binding proteins, it binds directly to 16S rRNA where it nucleates assembly of the head domain of the 30S subunit. This Lathraea clandestina (Purple toothwort) protein is Small ribosomal subunit protein uS7c (rps7).